The following is a 291-amino-acid chain: Nucleotide-binding protein CMM_1747 (291 aa).

15 to 22 (GMSGAGRS) contacts ATP. 66–69 (DVRG) serves as a coordination point for GTP.

It belongs to the RapZ-like family.

Its function is as follows. Displays ATPase and GTPase activities. The sequence is that of Nucleotide-binding protein CMM_1747 from Clavibacter michiganensis subsp. michiganensis (strain NCPPB 382).